The chain runs to 668 residues: Fructose-1,6-bisphosphatase class 3 (668 aa).

This sequence belongs to the FBPase class 3 family. Mn(2+) serves as cofactor.

It catalyses the reaction beta-D-fructose 1,6-bisphosphate + H2O = beta-D-fructose 6-phosphate + phosphate. It participates in carbohydrate biosynthesis; gluconeogenesis. The sequence is that of Fructose-1,6-bisphosphatase class 3 from Clostridium botulinum (strain Loch Maree / Type A3).